The following is a 1238-amino-acid chain: Cryptic loci regulator protein 1 (1238 aa).

6 disordered regions span residues 133 to 156 (TQQQVSNVSHGNFKPNSSVNTEPN), 196 to 237 (PFSN…PSSI), 277 to 303 (ASLYDRSPSKKDITSSRNTSSYNLGSM), 546 to 568 (QKSVSSETTLVKPSSTSSYIDTT), 696 to 735 (SDNTDCSLPKPSNSKLSSISSDGDASSNRMAVPDKSPFVH), and 784 to 824 (TLKE…QSRS). The span at 214 to 223 (NVKNNSKKTA) shows a compositional bias: polar residues. The segment covering 224 to 237 (SSVNSNHSSIPSSI) has biased composition (low complexity). The segment covering 291–303 (SSRNTSSYNLGSM) has biased composition (polar residues). The segment covering 702 to 723 (SLPKPSNSKLSSISSDGDASSN) has biased composition (low complexity). A compositionally biased stretch (basic and acidic residues) spans 785-796 (LKEDASSTKQAK). A compositionally biased stretch (polar residues) spans 810–819 (NDVSKNNSGE). The C2H2-type zinc finger occupies 1062-1087 (LNCEVSNCKKCFSNYEDMFKHLQHSH).

Interacts with clr3.

Its subcellular location is the nucleus. The protein resides in the chromosome. The protein localises to the centromere. It localises to the telomere. In terms of biological role, regulates silencing of the mat2 and mat3 loci. Organizes the chromatin structure of the mating-type region where it also participates in establishing the 'cold spot' for recombination. Required for proper positioning of nucleosomes at heterochromatic loci and for transcriptional gene silencing (TGS) function of the Snf2/Hdac-containing repressor complex (SHREC). The polypeptide is Cryptic loci regulator protein 1 (clr1) (Schizosaccharomyces pombe (strain 972 / ATCC 24843) (Fission yeast)).